A 434-amino-acid polypeptide reads, in one-letter code: MFS-type transporter AFUA_1G00970 (434 aa).

12 helical membrane-spanning segments follow: residues 21–41, 60–80, 87–107, 112–132, 145–165, 182–202, 240–260, 278–298, 301–321, 327–347, 364–384, and 393–413; these read VIGGTCALLCTVGFVVAFGVF, WIGSASIFLLYVSAPICGVLV, VLLIAGSIGVLVAIFMISLCS, IFLAQAVLLGISMGFVTWPPF, LALGVITGGSSVGGIVWSIMI, VLGFTMLPLLAFACISITEPP, VFISICVGFGLAFLGLFNPFF, YMISIMNAATLFGRVIPGIVA, VGHYNVMIFVLLASGITSFCW, LTGLVIWSIAYGFSSGAILSL, AIGFLQGSLAVTVLVGSPIGG, and LSLSMFTGATLVMGAVVMGYA. The interval 201-225 is disordered; it reads PPKQSQPQPRPALEATVEGGSASPT.

The protein belongs to the major facilitator superfamily. Monocarboxylate porter (TC 2.A.1.13) family.

The protein localises to the cell membrane. MFS-type transporter; part of the gene cluster that mediates the biosynthesis of fumigermin that inhibits germination of spores of the inducing S.rapamycinicus, and thus helps the fungus to defend resources in the shared habitat against a bacterial competitor. May be involved in the secretion of fumigermin. In Aspergillus fumigatus (strain ATCC MYA-4609 / CBS 101355 / FGSC A1100 / Af293) (Neosartorya fumigata), this protein is MFS-type transporter AFUA_1G00970.